We begin with the raw amino-acid sequence, 218 residues long: Peptide methionine sulfoxide reductase MsrA (218 aa).

C54 is a catalytic residue.

The protein belongs to the MsrA Met sulfoxide reductase family.

The enzyme catalyses L-methionyl-[protein] + [thioredoxin]-disulfide + H2O = L-methionyl-(S)-S-oxide-[protein] + [thioredoxin]-dithiol. It catalyses the reaction [thioredoxin]-disulfide + L-methionine + H2O = L-methionine (S)-S-oxide + [thioredoxin]-dithiol. Functionally, has an important function as a repair enzyme for proteins that have been inactivated by oxidation. Catalyzes the reversible oxidation-reduction of methionine sulfoxide in proteins to methionine. The protein is Peptide methionine sulfoxide reductase MsrA of Azorhizobium caulinodans (strain ATCC 43989 / DSM 5975 / JCM 20966 / LMG 6465 / NBRC 14845 / NCIMB 13405 / ORS 571).